The primary structure comprises 438 residues: Cysteine--tRNA ligase (438 aa).

Zn(2+) is bound at residue Cys28. Positions 30-40 (PTVYNHLHLGN) match the 'HIGH' region motif. Zn(2+) is bound by residues Cys207, His232, and Glu236. A 'KMSKS' region motif is present at residues 264 to 268 (KMSKS). Residue Lys267 coordinates ATP.

It belongs to the class-I aminoacyl-tRNA synthetase family. Monomer. The cofactor is Zn(2+).

The protein resides in the cytoplasm. It carries out the reaction tRNA(Cys) + L-cysteine + ATP = L-cysteinyl-tRNA(Cys) + AMP + diphosphate. This chain is Cysteine--tRNA ligase, found in Onion yellows phytoplasma (strain OY-M).